A 928-amino-acid polypeptide reads, in one-letter code: DNA-binding protein RFX6 (928 aa).

2 disordered regions span residues 1–20 (MAKV…APQL) and 50–98 (EGQP…SKTK). A DNA-binding region (RFX-type winged-helix) is located at residues 124–199 (TLQWLEENYI…YHYYGIGIKE (76 aa)).

The protein belongs to the RFX family. As to quaternary structure, interacts with RFX3. Expressed in pancreas. Expressed in pancreatic beta-cells (insulin-positive cells) and alpha-cells (glucagon-positive cells) (at protein level). Specifically expressed in pancreas, small intestine and colon. Expressed in endocrine cells in the islets.

The protein resides in the nucleus. Transcription factor required to direct islet cell differentiation during endocrine pancreas development. Specifically required for the differentiation of 4 of the 5 islet cell types and for the production of insulin. Not required for pancreatic PP (polypeptide-producing) cells differentiation. Acts downstream of NEUROG3 and regulates the transcription factors involved in beta-cell maturation and function, thereby restricting the expression of the beta-cell differentiation and specification genes, and thus the beta-cell fate choice. Activates transcription by forming a heterodimer with RFX3 and binding to the X-box in the promoter of target genes. Involved in glucose-stimulated insulin secretion by promoting insulin and L-type calcium channel gene transcription. The chain is DNA-binding protein RFX6 (RFX6) from Homo sapiens (Human).